We begin with the raw amino-acid sequence, 408 residues long: 3-phosphoshikimate 1-carboxyvinyltransferase (408 aa).

3-phosphoshikimate-binding residues include lysine 10, serine 11, and arginine 15. Position 10 (lysine 10) interacts with phosphoenolpyruvate. Positions 79 and 107 each coordinate phosphoenolpyruvate. 3-phosphoshikimate contacts are provided by serine 150, serine 151, glutamine 152, serine 179, glutamate 297, and histidine 324. Residue glutamine 152 participates in phosphoenolpyruvate binding. Glutamate 297 serves as the catalytic Proton acceptor. Arginine 328, arginine 369, and lysine 394 together coordinate phosphoenolpyruvate.

The protein belongs to the EPSP synthase family. As to quaternary structure, monomer.

The protein resides in the cytoplasm. The enzyme catalyses 3-phosphoshikimate + phosphoenolpyruvate = 5-O-(1-carboxyvinyl)-3-phosphoshikimate + phosphate. It functions in the pathway metabolic intermediate biosynthesis; chorismate biosynthesis; chorismate from D-erythrose 4-phosphate and phosphoenolpyruvate: step 6/7. Functionally, catalyzes the transfer of the enolpyruvyl moiety of phosphoenolpyruvate (PEP) to the 5-hydroxyl of shikimate-3-phosphate (S3P) to produce enolpyruvyl shikimate-3-phosphate and inorganic phosphate. This Corynebacterium efficiens (strain DSM 44549 / YS-314 / AJ 12310 / JCM 11189 / NBRC 100395) protein is 3-phosphoshikimate 1-carboxyvinyltransferase.